A 678-amino-acid polypeptide reads, in one-letter code: DNA ligase (678 aa).

Residues 47–51, 96–97, and Glu-122 each bind NAD(+); these read DSDYD and SL. Lys-124 acts as the N6-AMP-lysine intermediate in catalysis. The NAD(+) site is built by Arg-145, Glu-182, Lys-300, and Lys-324. Residues Cys-418, Cys-421, Cys-436, and Cys-442 each coordinate Zn(2+). One can recognise a BRCT domain in the interval 602–678; sequence AYNESFTGKT…ILEDNLKDLL (77 aa).

This sequence belongs to the NAD-dependent DNA ligase family. LigA subfamily. Mg(2+) is required as a cofactor. It depends on Mn(2+) as a cofactor.

The enzyme catalyses NAD(+) + (deoxyribonucleotide)n-3'-hydroxyl + 5'-phospho-(deoxyribonucleotide)m = (deoxyribonucleotide)n+m + AMP + beta-nicotinamide D-nucleotide.. DNA ligase that catalyzes the formation of phosphodiester linkages between 5'-phosphoryl and 3'-hydroxyl groups in double-stranded DNA using NAD as a coenzyme and as the energy source for the reaction. It is essential for DNA replication and repair of damaged DNA. This is DNA ligase from Francisella tularensis subsp. tularensis (strain SCHU S4 / Schu 4).